We begin with the raw amino-acid sequence, 224 residues long: Endonuclease NucS (224 aa).

It belongs to the NucS endonuclease family.

The protein localises to the cytoplasm. Cleaves both 3' and 5' ssDNA extremities of branched DNA structures. This chain is Endonuclease NucS, found in Rhodococcus erythropolis (strain PR4 / NBRC 100887).